We begin with the raw amino-acid sequence, 486 residues long: Siroheme synthase (486 aa).

The tract at residues 1 to 204 (MNYLPIFVDL…HQIEQAEALV (204 aa)) is precorrin-2 dehydrogenase /sirohydrochlorin ferrochelatase. Residues 22-23 (HV) and 43-44 (EK) contribute to the NAD(+) site. Ser-128 is modified (phosphoserine). Positions 216–486 (GEVSLVGAGP…NKETHWKQAA (271 aa)) are uroporphyrinogen-III C-methyltransferase. Pro-225 contributes to the S-adenosyl-L-methionine binding site. The active-site Proton acceptor is the Asp-248. Lys-270 functions as the Proton donor in the catalytic mechanism. Residues 301 to 303 (GGD), Val-306, 331 to 332 (TA), Met-383, and Gly-412 each bind S-adenosyl-L-methionine.

It in the N-terminal section; belongs to the precorrin-2 dehydrogenase / sirohydrochlorin ferrochelatase family. The protein in the C-terminal section; belongs to the precorrin methyltransferase family.

It carries out the reaction uroporphyrinogen III + 2 S-adenosyl-L-methionine = precorrin-2 + 2 S-adenosyl-L-homocysteine + H(+). It catalyses the reaction precorrin-2 + NAD(+) = sirohydrochlorin + NADH + 2 H(+). The catalysed reaction is siroheme + 2 H(+) = sirohydrochlorin + Fe(2+). It functions in the pathway cofactor biosynthesis; adenosylcobalamin biosynthesis; precorrin-2 from uroporphyrinogen III: step 1/1. It participates in cofactor biosynthesis; adenosylcobalamin biosynthesis; sirohydrochlorin from precorrin-2: step 1/1. Its pathway is porphyrin-containing compound metabolism; siroheme biosynthesis; precorrin-2 from uroporphyrinogen III: step 1/1. The protein operates within porphyrin-containing compound metabolism; siroheme biosynthesis; siroheme from sirohydrochlorin: step 1/1. It functions in the pathway porphyrin-containing compound metabolism; siroheme biosynthesis; sirohydrochlorin from precorrin-2: step 1/1. Multifunctional enzyme that catalyzes the SAM-dependent methylations of uroporphyrinogen III at position C-2 and C-7 to form precorrin-2 via precorrin-1. Then it catalyzes the NAD-dependent ring dehydrogenation of precorrin-2 to yield sirohydrochlorin. Finally, it catalyzes the ferrochelation of sirohydrochlorin to yield siroheme. This is Siroheme synthase from Actinobacillus pleuropneumoniae serotype 7 (strain AP76).